We begin with the raw amino-acid sequence, 121 residues long: Small ribosomal subunit protein uS13 (121 aa).

The tract at residues 93-121 (RGLPVRGQNTKNNARTRKGKATAIAGKKK) is disordered. Residues 106-121 (ARTRKGKATAIAGKKK) are compositionally biased toward basic residues.

It belongs to the universal ribosomal protein uS13 family. As to quaternary structure, part of the 30S ribosomal subunit. Forms a loose heterodimer with protein S19. Forms two bridges to the 50S subunit in the 70S ribosome.

Functionally, located at the top of the head of the 30S subunit, it contacts several helices of the 16S rRNA. In the 70S ribosome it contacts the 23S rRNA (bridge B1a) and protein L5 of the 50S subunit (bridge B1b), connecting the 2 subunits; these bridges are implicated in subunit movement. Contacts the tRNAs in the A and P-sites. This chain is Small ribosomal subunit protein uS13, found in Streptococcus uberis (strain ATCC BAA-854 / 0140J).